Here is a 326-residue protein sequence, read N- to C-terminus: AA9 family lytic polysaccharide monooxygenase B (326 aa).

The signal sequence occupies residues 1–19 (MKSFTIAALAALWAQEAAA). Histidine 20 and histidine 98 together coordinate Cu(2+). Residues cysteine 57 and cysteine 192 are joined by a disulfide bond. The O2 site is built by histidine 178 and glutamine 187. Tyrosine 189 lines the Cu(2+) pocket. The segment covering 265–281 (PSATLTQPTSTATATSA) has biased composition (low complexity). The interval 265–286 (PSATLTQPTSTATATSAPGGGG) is disordered. The 38-residue stretch at 289 to 326 (CTAAKYQQCGGTGYTGCTTCASGSTCSAVSPPYYSQCL) folds into the CBM1 domain.

It belongs to the polysaccharide monooxygenase AA9 family. It depends on Cu(2+) as a cofactor.

The protein localises to the secreted. The enzyme catalyses [(1-&gt;4)-beta-D-glucosyl]n+m + reduced acceptor + O2 = 4-dehydro-beta-D-glucosyl-[(1-&gt;4)-beta-D-glucosyl]n-1 + [(1-&gt;4)-beta-D-glucosyl]m + acceptor + H2O.. Lytic polysaccharide monooxygenase (LPMO) that depolymerizes crystalline and amorphous polysaccharides via the oxidation of scissile alpha- or beta-(1-4)-glycosidic bonds, yielding C1 and C4 oxidation products. Catalysis by LPMOs requires the reduction of the active-site copper from Cu(II) to Cu(I) by a reducing agent and H(2)O(2) or O(2) as a cosubstrate. Shows no activity on wheat arabinoxylan, konjac glucomannan, acetylated spruce galactoglucomannan, or cellopentaose. This Thermothielavioides terrestris (strain ATCC 38088 / NRRL 8126) (Thielavia terrestris) protein is AA9 family lytic polysaccharide monooxygenase B.